The chain runs to 320 residues: Chitinase 3 (320 aa).

The signal sequence occupies residues Met1–Gly18. Positions Glu19–Gly59 constitute a Chitin-binding type-1 domain. 8 disulfides stabilise this stretch: Cys21/Cys36, Cys30/Cys42, Cys33/Cys61, Cys35/Cys49, Cys53/Cys57, Cys97/Cys159, Cys172/Cys180, and Cys279/Cys311. The Proton donor role is filled by Glu141.

This sequence belongs to the glycosyl hydrolase 19 family. Chitinase class I subfamily. As to expression, expressed at low levels in roots, leaves, sheaths and meristems.

The catalysed reaction is Random endo-hydrolysis of N-acetyl-beta-D-glucosaminide (1-&gt;4)-beta-linkages in chitin and chitodextrins.. Its function is as follows. Hydrolyzes chitin and plays a role in defense against fungal pathogens containing chitin. Inhibits the growth of T.reesei fungus on plate assay. The polypeptide is Chitinase 3 (Cht3) (Oryza sativa subsp. japonica (Rice)).